The sequence spans 712 residues: Lactoperoxidase (712 aa).

Positions 1–26 are cleaved as a signal peptide; it reads MRVLLHLPALLASLILLQAAASTTRA. A propeptide spanning residues 27–80 is cleaved from the precursor; that stretch reads QTTRTSAISDTVSQAKVQVNKAFLDSRTRLKTAMSSETPTSRQLSEYLKHAKGR. Asparagine 106 carries N-linked (GlcNAc...) asparagine glycosylation. Cysteine 132 and cysteine 145 form a disulfide bridge. The N-linked (GlcNAc...) asparagine glycan is linked to asparagine 212. Aspartate 225 is a binding site for heme b. The active-site Proton acceptor is histidine 226. Aspartate 227 serves as a coordination point for Ca(2+). Cystine bridges form between cysteine 246–cysteine 256 and cysteine 250–cysteine 274. Ca(2+) contacts are provided by threonine 301, phenylalanine 303, aspartate 305, and serine 307. At serine 315 the chain carries Phosphoserine. N-linked (GlcNAc...) asparagine glycans are attached at residues asparagine 322 and asparagine 358. Cysteine 354 and cysteine 365 are oxidised to a cystine. Glutamate 375 and histidine 468 together coordinate heme b. The residue at position 482 (tyrosine 482) is a 3'-nitrotyrosine. Cystine bridges form between cysteine 573/cysteine 630 and cysteine 671/cysteine 696.

The protein belongs to the peroxidase family. XPO subfamily. The cofactor is Ca(2+). Heme b is required as a cofactor. As to expression, mammary gland, milk and salivary gland. Found in bronchial submucosal glands.

It localises to the secreted. The protein resides in the cytoplasm. It catalyses the reaction 2 a phenolic donor + H2O2 = 2 a phenolic radical donor + 2 H2O. It carries out the reaction thiocyanate + H2O2 + H(+) = hypothiocyanous acid + H2O. The catalysed reaction is iodide + H2O2 = hypoiodite + H2O. Heme-containing oxidoreductase which catalyzes the conversion of thiocyanate (SCN(-)) into antimicrobial agent hypothiocyanous acid (OSCN(-)) in the presence of hydrogen peroxide (H2O2). Also involved in the conversion of iodide (I(-)) into hypoiodite (IO(-)) in the presence of H2O2. Responsible for the inactivation of a wide range of micro-organisms and hence, important component of defense mechanism. Shows antibacterial properties against Pseudomonas aeruginosa. The lactoperoxidase-SCN(-)-H2O2 system shows antibacterial properties against Burkholderia cepacia and Haemophilus influenzae in vitro. Present in mammary and salivary gland secretions and may contribute to airway host defense against infection. May contribute to maintaining an appropriate H2O2 cellular level, therefore protecting cells from H2O2-caused injuries and inflammation. This chain is Lactoperoxidase, found in Homo sapiens (Human).